A 348-amino-acid polypeptide reads, in one-letter code: Zinc finger protein 843 (348 aa).

Residues 33-55 (CKCKACGRGFTQSASLLQHWRVH) form a C2H2-type 1 zinc finger. A C2H2-type 2; degenerate zinc finger spans residues 145–167 (FCCCSCGDSVNEKTSLSQRVLPH). The segment covering 184 to 195 (APSSVAPDSTSG) has biased composition (polar residues). Disordered stretches follow at residues 184–203 (APSS…GSPG) and 256–329 (ATQP…WRGA).

The sequence is that of Zinc finger protein 843 (ZNF843) from Homo sapiens (Human).